A 42-amino-acid polypeptide reads, in one-letter code: Large ribosomal subunit protein eL32 (42 aa).

This sequence belongs to the eukaryotic ribosomal protein eL32 family.

The protein is Large ribosomal subunit protein eL32 (RPL32) of Zea mays (Maize).